A 267-amino-acid polypeptide reads, in one-letter code: GTP cyclohydrolase FolE2 (267 aa).

This sequence belongs to the GTP cyclohydrolase IV family.

The catalysed reaction is GTP + H2O = 7,8-dihydroneopterin 3'-triphosphate + formate + H(+). It functions in the pathway cofactor biosynthesis; 7,8-dihydroneopterin triphosphate biosynthesis; 7,8-dihydroneopterin triphosphate from GTP: step 1/1. Converts GTP to 7,8-dihydroneopterin triphosphate. This Nitrosomonas eutropha (strain DSM 101675 / C91 / Nm57) protein is GTP cyclohydrolase FolE2.